Here is a 750-residue protein sequence, read N- to C-terminus: Polyribonucleotide nucleotidyltransferase (750 aa).

The Mg(2+) site is built by Asp489 and Asp495. Positions 556-620 constitute a KH domain; sequence PKMITRRIPN…EGIDKVIAKI (65 aa). One can recognise an S1 motif domain in the interval 630 to 701; sequence GSVYEVKVIK…KTRKDKVSRK (72 aa). Residues 697-750 are disordered; the sequence is KVSRKALMEKPEGYKERAPRDRDDKRGSRDNNRGRDNRGRDNRRDDRKPRENKD. The segment covering 702-750 has biased composition (basic and acidic residues); that stretch reads ALMEKPEGYKERAPRDRDDKRGSRDNNRGRDNRGRDNRRDDRKPRENKD.

Belongs to the polyribonucleotide nucleotidyltransferase family. It depends on Mg(2+) as a cofactor.

It localises to the cytoplasm. The catalysed reaction is RNA(n+1) + phosphate = RNA(n) + a ribonucleoside 5'-diphosphate. Involved in mRNA degradation. Catalyzes the phosphorolysis of single-stranded polyribonucleotides processively in the 3'- to 5'-direction. In Christiangramia forsetii (strain DSM 17595 / CGMCC 1.15422 / KT0803) (Gramella forsetii), this protein is Polyribonucleotide nucleotidyltransferase.